We begin with the raw amino-acid sequence, 527 residues long: Protein Lilipod (527 aa).

Topologically, residues 1-22 (MDEEEEEEVTDLKLQLFHNTVR) are extracellular. The helical transmembrane segment at 23-43 (EHIIFLLLIILLYSSSYVVVS) threads the bilayer. Over 44–65 (RFRRRDRDDLYSNDEDEVLVYR) the chain is Cytoplasmic. A helical transmembrane segment spans residues 66 to 86 (ISFWLCTFTLAVAEGAAMLLP). The Extracellular segment spans residues 87–117 (VSIASNEVLLLYPNSYYVKWLNSSLIQGLWN). Residues 118 to 138 (HVFLFSNLSLFIFLPFVYLFS) form a helical membrane-spanning segment. The Cytoplasmic segment spans residues 139–160 (ESTGFVGNKKGILPRVYETFTV). Residues 161–181 (FMLMAIIVLVLTAVLSAVFGI) form a helical membrane-spanning segment. The Extracellular segment spans residues 182 to 194 (EKLQFFWFLNLGS). A helical transmembrane segment spans residues 195-215 (VHLPFLYSCVSFLGVMLMLIC). Topologically, residues 216 to 341 (TPYGFVRLFG…LRTSSTFQRT (126 aa)) are cytoplasmic. Residues 342–362 (FVYPLAMLLLLFCTAVTILLV) traverse the membrane as a helical segment. The Extracellular portion of the chain corresponds to 363 to 395 (VQNTLELLIGIKALPLSTRQFALGISSLSKLGP). The chain crosses the membrane as a helical span at residues 396–416 (FGAGLEVCLIFYLGATSVVGF). The Cytoplasmic portion of the chain corresponds to 417 to 433 (YSMPFMRKVCPKRRQTS). A helical membrane pass occupies residues 434–454 (LPQLMLNCGFMLVLSSALPLL). Over 455 to 468 (SRIIGITNFDLLGD) the chain is Extracellular. The chain crosses the membrane as a helical span at residues 469-489 (FGAIEWLGNFQIVLLYNLVFG). Over 490–527 (TTTALCLANKFTATVRRELRARLVENYVLFTNYISFIN) the chain is Cytoplasmic.

This sequence belongs to the LIMR family. In terms of tissue distribution, in the ovary, detected in germline stem cells and their progeny. Also detected in the somatic follicular epithelium.

The protein resides in the cell membrane. Its function is as follows. Required during oogenesis to promote self-renewal of germline stem cells, probably by enhancing BMP signaling activity. This is Protein Lilipod from Drosophila melanogaster (Fruit fly).